Here is a 319-residue protein sequence, read N- to C-terminus: Taste receptor type 2 member 30 (319 aa).

Residue methionine 1 is a topological domain, extracellular. A helical membrane pass occupies residues 2–22 (ITFLPIIFSILIVVIFVIGNF). At 23 to 46 (ANGFIALVNSIEWVKRQKISFVDQ) the chain is on the cytoplasmic side. Residues 47–67 (ILTALAVSRVGLLWVLLLHWY) traverse the membrane as a helical segment. Residues 68–86 (ATQLNPAFYSVEVRITAYN) are Extracellular-facing. A helical transmembrane segment spans residues 87-107 (VWAVTNHFSSWLATSLSMFYL). Residues 108 to 126 (LRIANFSNLIFLRIKRRVK) lie on the Cytoplasmic side of the membrane. Residues 127 to 147 (SVVLVILLGPLLFLVCHLFVI) form a helical membrane-spanning segment. Residues 148 to 178 (NMDETVWTKEYEGNVTWKIKLRSAMYHSNMT) are Extracellular-facing. N-linked (GlcNAc...) asparagine glycosylation is found at asparagine 161 and asparagine 176. The chain crosses the membrane as a helical span at residues 179–199 (LTMLANFVPLTLTLISFLLLI). Topologically, residues 200-229 (CSLCKHLKKMQLHGKGSQDPSTKVHIKALQ) are cytoplasmic. A helical membrane pass occupies residues 230 to 250 (TVTSFLLLCAIYFLSMIISVC). The Extracellular segment spans residues 251–259 (NFGRLEKQP). The chain crosses the membrane as a helical span at residues 260–280 (VFMFCQAIIFSYPSTHPFILI). The Cytoplasmic segment spans residues 281–319 (LGNKKLKQIFLSVLRHVRYWVKDRSLRLHRFTRGALCVF).

This sequence belongs to the G-protein coupled receptor T2R family. Expressed in subsets of taste receptor cells of the tongue and exclusively in gustducin-positive cells.

The protein resides in the membrane. Its function is as follows. Receptor that may play a role in the perception of bitterness and is gustducin-linked. May play a role in sensing the chemical composition of the gastrointestinal content. The activity of this receptor may stimulate alpha gustducin, mediate PLC-beta-2 activation and lead to the gating of TRPM5. This chain is Taste receptor type 2 member 30 (TAS2R30), found in Homo sapiens (Human).